A 506-amino-acid polypeptide reads, in one-letter code: MTDQSPAPTAQDENRLIAERRAKLARLRETGVAFPNDFVPDAHAADLHARYDGLDQEALTAAAVTVKVAGRMMLKRVMGKASFATLQDGSGRIQIYLERGTLGEEAYAAFKQWDIGDIIAIEGPVFKTNKGELSVHANSARLLSKSLRPLPDKFHGVADQELRYRQRYVDLIMTDATRRTFEARSKAVGGIRQAMLNAGFFEVETPMLHPIPGGAAAKPFVTHHNALDMQMFLRIAPELYLKRLIVGGFERVFEINRNFRNEGVSPRHNPEFTMMEFYAAYADYRWLMDFTEDLIRQAAIAATGSAVLSYQDRELDLSQPFDHLTICEAILKYAEGYTQAQLDDPAFVRAELRKLGANVEGPPLARAGLGALQLALFEETAEARLWRPTYIIDYPVEVSPLARASDTRDGITERFELFITGREIANGFSELNDPEDQAERFRAQVEAKDAGDEEAMYFDADYIRALEYGMPPTGGCGIGIDRLVMLLTDSPSIRDVILFPHLRRED.

Residues Glu416 and Glu423 each contribute to the Mg(2+) site.

Belongs to the class-II aminoacyl-tRNA synthetase family. As to quaternary structure, homodimer. It depends on Mg(2+) as a cofactor.

It is found in the cytoplasm. The catalysed reaction is tRNA(Lys) + L-lysine + ATP = L-lysyl-tRNA(Lys) + AMP + diphosphate. This Bordetella parapertussis (strain 12822 / ATCC BAA-587 / NCTC 13253) protein is Lysine--tRNA ligase.